The primary structure comprises 320 residues: Foldase protein PrsA (320 aa).

Positions methionine 1 to alanine 20 are cleaved as a signal peptide. Residue cysteine 21 is the site of N-palmitoyl cysteine attachment. Cysteine 21 carries S-diacylglycerol cysteine lipidation. Positions glutamate 139–lysine 245 constitute a PpiC domain. The disordered stretch occupies residues glutamate 159 to alanine 198.

This sequence belongs to the PrsA family.

The protein resides in the cell membrane. It catalyses the reaction [protein]-peptidylproline (omega=180) = [protein]-peptidylproline (omega=0). Plays a major role in protein secretion by helping the post-translocational extracellular folding of several secreted proteins. This is Foldase protein PrsA from Staphylococcus aureus (strain Mu3 / ATCC 700698).